A 445-amino-acid chain; its full sequence is Inositol-pentakisphosphate 2-kinase IPK1 (445 aa).

Residues glycine 19–asparagine 22 and arginine 40 each bind ATP. Residue arginine 127 participates in substrate binding. Residues serine 144–histidine 146 and glutamate 162–lysine 164 each bind ATP. An EXKPK motif motif is present at residues glutamate 162 to lysine 166. Substrate is bound by residues lysine 166, lysine 196, and asparagine 234. Arginine 237 provides a ligand contact to ATP. Zn(2+)-binding residues include histidine 312, cysteine 322, cysteine 325, and histidine 341. Aspartate 363 contributes to the substrate binding site. ATP is bound at residue aspartate 402. Substrate contacts are provided by lysine 406, lysine 410, and tyrosine 414.

The protein belongs to the IPK1 type 2 family. Zn(2+) is required as a cofactor.

It carries out the reaction 1D-myo-inositol 1,3,4,5,6-pentakisphosphate + ATP = 1D-myo-inositol hexakisphosphate + ADP + H(+). Functionally, phosphorylates Ins(1,3,4,5,6)P5 at position 2 to form Ins(1,2,3,4,5,6)P6 (InsP6 or phytate). Phytate is a regulator of intracellular signaling, a highly abundant animal antinutrient, and a phosphate store in plant seeds. Also phosphorylates Ins(1,3,4,6)P4 and Ins(1,4,5,6)P4 to produce Ins(1,2,3,4,6)P5 and Ins(1,2,4,5,6)P5. The polypeptide is Inositol-pentakisphosphate 2-kinase IPK1 (Oryza sativa subsp. indica (Rice)).